We begin with the raw amino-acid sequence, 410 residues long: Probable tRNA sulfurtransferase (410 aa).

Residues 58–167 (AELTRRLQEV…RREIFVSVER (110 aa)) form the THUMP domain. ATP contacts are provided by residues 185-186 (LL), 210-211 (HF), arginine 267, glycine 289, and glutamine 298.

Belongs to the ThiI family.

The protein localises to the cytoplasm. It catalyses the reaction [ThiI sulfur-carrier protein]-S-sulfanyl-L-cysteine + a uridine in tRNA + 2 reduced [2Fe-2S]-[ferredoxin] + ATP + H(+) = [ThiI sulfur-carrier protein]-L-cysteine + a 4-thiouridine in tRNA + 2 oxidized [2Fe-2S]-[ferredoxin] + AMP + diphosphate. The catalysed reaction is [ThiS sulfur-carrier protein]-C-terminal Gly-Gly-AMP + S-sulfanyl-L-cysteinyl-[cysteine desulfurase] + AH2 = [ThiS sulfur-carrier protein]-C-terminal-Gly-aminoethanethioate + L-cysteinyl-[cysteine desulfurase] + A + AMP + 2 H(+). Its pathway is cofactor biosynthesis; thiamine diphosphate biosynthesis. Its function is as follows. Catalyzes the ATP-dependent transfer of a sulfur to tRNA to produce 4-thiouridine in position 8 of tRNAs, which functions as a near-UV photosensor. Also catalyzes the transfer of sulfur to the sulfur carrier protein ThiS, forming ThiS-thiocarboxylate. This is a step in the synthesis of thiazole, in the thiamine biosynthesis pathway. The sulfur is donated as persulfide by IscS. This is Probable tRNA sulfurtransferase from Nocardia farcinica (strain IFM 10152).